Reading from the N-terminus, the 631-residue chain is Phosphomethylpyrimidine synthase (631 aa).

Residues Asn-239, Met-268, Tyr-297, His-333, 353-355 (SRG), 394-397 (DGLR), and Glu-433 contribute to the substrate site. His-437 contributes to the Zn(2+) binding site. Tyr-460 lines the substrate pocket. His-501 contacts Zn(2+). Residues Cys-581, Cys-584, and Cys-589 each contribute to the [4Fe-4S] cluster site.

Belongs to the ThiC family. In terms of assembly, homodimer. It depends on [4Fe-4S] cluster as a cofactor.

The enzyme catalyses 5-amino-1-(5-phospho-beta-D-ribosyl)imidazole + S-adenosyl-L-methionine = 4-amino-2-methyl-5-(phosphooxymethyl)pyrimidine + CO + 5'-deoxyadenosine + formate + L-methionine + 3 H(+). It participates in cofactor biosynthesis; thiamine diphosphate biosynthesis. Its function is as follows. Catalyzes the synthesis of the hydroxymethylpyrimidine phosphate (HMP-P) moiety of thiamine from aminoimidazole ribotide (AIR) in a radical S-adenosyl-L-methionine (SAM)-dependent reaction. The chain is Phosphomethylpyrimidine synthase from Escherichia coli O157:H7.